We begin with the raw amino-acid sequence, 99 residues long: Plastocyanin (99 aa).

The 99-residue stretch at 1 to 99 folds into the Plastocyanin-like domain; sequence IEILLGGDDG…AGMVGKVTVN (99 aa). Cu cation is bound by residues His-37, Cys-84, His-87, and Met-92.

The protein belongs to the plastocyanin family. Cu(2+) is required as a cofactor.

The protein localises to the plastid. The protein resides in the chloroplast thylakoid membrane. Its function is as follows. Participates in electron transfer between P700 and the cytochrome b6-f complex in photosystem I. In Cucumis sativus (Cucumber), this protein is Plastocyanin (PETE).